The primary structure comprises 194 residues: Interleukin-18 (194 aa).

Positions 1 to 36 are excised as a propeptide; sequence MAAMSEEGSCVNFKEMMFIDNTLYLIPEDNGDLESD.

Belongs to the IL-1 family. In terms of assembly, forms a ternary complex with ligand-binding receptor subunit IL18R1 and signaling receptor subunit IL18RAP at the plasma membrane. Mature IL18 first binds to IL18R1 forming a low affinity binary complex, which then interacts with IL18RAP to form a high affinity ternary complex that signals inside the cell. Interacts with cargo receptor TMED10; the interaction mediates the translocation from the cytoplasm into the ERGIC (endoplasmic reticulum-Golgi intermediate compartment) and thereby secretion. The pro-IL-18 precursor is processed by CASP1 to yield its mature, active form. The pro-IL-18 precursor is however not processed by Casp4/Casp11 in rodents. The pro-IL-18 precursor features autoinhibitory interactions between the propeptide and the post-cleavage-site region, preventing recognition by the IL18R1 receptor. Processing by CASP1 induces conformational changes to generate critical receptor-binding sites. The mature form is then secreted and released in the extracellular milieu by passing through the gasdermin-D (GSDMD) pore. In contrast, cleavage by CASP3 inactivates IL18.

It localises to the cytoplasm. Its subcellular location is the cytosol. The protein localises to the secreted. Its function is as follows. Pro-inflammatory cytokine primarily involved in epithelial barrier repair, polarized T-helper 1 (Th1) cell and natural killer (NK) cell immune responses. Upon binding to IL18R1 and IL18RAP, forms a signaling ternary complex which activates NF-kappa-B, triggering synthesis of inflammatory mediators. Synergizes with IL12/interleukin-12 to induce IFNG synthesis from T-helper 1 (Th1) cells and natural killer (NK) cells. Involved in transduction of inflammation downstream of pyroptosis: its mature form is specifically released in the extracellular milieu by passing through the gasdermin-D (GSDMD) pore. The polypeptide is Interleukin-18 (Il18) (Rattus norvegicus (Rat)).